We begin with the raw amino-acid sequence, 335 residues long: Urokinase plasminogen activator surface receptor (335 aa).

The signal sequence occupies residues 1–22 (MGHPLLLPLLLLLHTCVPASWG). UPAR/Ly6 domains lie at 23-114 (LRCM…RSRY), 115-213 (LECI…PQNG), and 214-305 (HQCY…YRKG). 3 cysteine pairs are disulfide-bonded: Cys25–Cys46, Cys28–Cys34, and Cys39–Cys67. An N-linked (GlcNAc...) asparagine glycan is attached at Asn74. Cystine bridges form between Cys93/Cys98, Cys117/Cys144, Cys120/Cys127, Cys137/Cys169, Cys175/Cys192, Cys193/Cys198, Cys216/Cys244, Cys219/Cys227, Cys237/Cys263, Cys269/Cys287, and Cys288/Cys293. N-linked (GlcNAc...) asparagine glycosylation is found at Asn184, Asn194, Asn222, Asn255, and Asn284. The GPI-anchor amidated glycine moiety is linked to residue Gly305. The propeptide at 306-335 (AAPQPGPAHLSLTITLLMTARLWGGTLLWT) is removed in mature form.

In terms of assembly, monomer. Interacts (via the UPAR/Ly6 domains) with SRPX2. Interacts with MRC2. Interacts with FAP (seprase); the interaction occurs at the cell surface of invadopodia membrane. Interacts with SORL1 (via N-terminal ectodomain); this interaction decreases PLAUR internalization. The ternary complex composed of PLAUR-PLAU-SERPINE1 also interacts with SORL1.

It is found in the cell membrane. It localises to the cell projection. Its subcellular location is the invadopodium membrane. Its function is as follows. Acts as a receptor for urokinase plasminogen activator. Plays a role in localizing and promoting plasmin formation. Mediates the proteolysis-independent signal transduction activation effects of U-PA. It is subject to negative-feedback regulation by U-PA which cleaves it into an inactive form. This is Urokinase plasminogen activator surface receptor (PLAUR) from Macaca fascicularis (Crab-eating macaque).